Here is a 158-residue protein sequence, read N- to C-terminus: Endoribonuclease YbeY (158 aa).

Zn(2+) is bound by residues histidine 114, histidine 118, and histidine 124.

This sequence belongs to the endoribonuclease YbeY family. Requires Zn(2+) as cofactor.

It localises to the cytoplasm. Its function is as follows. Single strand-specific metallo-endoribonuclease involved in late-stage 70S ribosome quality control and in maturation of the 3' terminus of the 16S rRNA. The chain is Endoribonuclease YbeY from Pasteurella multocida (strain Pm70).